We begin with the raw amino-acid sequence, 43 residues long: Protein PsbN (43 aa).

The helical transmembrane segment at 7–27 threads the bilayer; sequence VTIFISGLLVSFTGYALYIAF.

The protein belongs to the PsbN family.

It localises to the plastid. The protein localises to the chloroplast thylakoid membrane. May play a role in photosystem I and II biogenesis. The polypeptide is Protein PsbN (Dioscorea bulbifera (Air potato)).